Reading from the N-terminus, the 165-residue chain is Lipoprotein signal peptidase (165 aa).

Helical transmembrane passes span Pro-9 to Val-29, Trp-65 to Leu-85, and Thr-97 to Val-119. Catalysis depends on residues Asp-121 and Asp-139. A helical transmembrane segment spans residues Val-134 to Phe-154.

Belongs to the peptidase A8 family.

The protein localises to the cell inner membrane. It catalyses the reaction Release of signal peptides from bacterial membrane prolipoproteins. Hydrolyzes -Xaa-Yaa-Zaa-|-(S,diacylglyceryl)Cys-, in which Xaa is hydrophobic (preferably Leu), and Yaa (Ala or Ser) and Zaa (Gly or Ala) have small, neutral side chains.. Its pathway is protein modification; lipoprotein biosynthesis (signal peptide cleavage). Its function is as follows. This protein specifically catalyzes the removal of signal peptides from prolipoproteins. The protein is Lipoprotein signal peptidase of Histophilus somni (strain 129Pt) (Haemophilus somnus).